The primary structure comprises 764 residues: Calpain-like protease palB/RIM13 (764 aa).

Positions 95–368 (GEFYPPLTVY…FKYFYINWNP (274 aa)) constitute a Calpain catalytic domain. Active-site residues include C165, H318, and N336.

Belongs to the peptidase C2 family. PalB/RIM13 subfamily.

Required for the proteolytic cleavage of the transcription factor RIM101 in response to alkaline ambient pH. The polypeptide is Calpain-like protease palB/RIM13 (Debaryomyces hansenii (strain ATCC 36239 / CBS 767 / BCRC 21394 / JCM 1990 / NBRC 0083 / IGC 2968) (Yeast)).